Here is a 426-residue protein sequence, read N- to C-terminus: MLTIKDIHALEVMDSRGNPTIQASVVLSDNTKASAIVPSGASTGKREALELRDNDKTRFLGKGVLRACENVNSVIKHHLIGLEAINQAFVDERLRALDGTPNYANLGANAVLGVSMALARASAKALNLPLYRYLGGANALTLPVPMLNIINGGTHANNSIDFQEYMIMPLGFESFKEALRASAEVYHTLKKLLDGKNQLTSVGDEGGFAPNFSNNVEPLEVISQAIEKAGYKLGEEIALALDVASSELVDENFNYHLKGENKILDSHELVAYYKELVAKYPIVSIEDGLSEDDWEGWAFLSKELGRQIQLVGDDLFVTNASLLQKGIEKNIANAVLIKPNQIGTISETLETIRLAKHHAYQCVMSHRSGESEDSFIADFAVALNTGEIKTGSTARSERIAKYNRLLEIEHELKGGIYIGKELFKHG.

A (2R)-2-phosphoglycerate-binding site is contributed by Gln163. The active-site Proton donor is Glu205. Positions 242, 286, and 313 each coordinate Mg(2+). The (2R)-2-phosphoglycerate site is built by Lys338, Arg367, Ser368, and Lys389. Lys338 serves as the catalytic Proton acceptor.

This sequence belongs to the enolase family. Mg(2+) serves as cofactor.

It localises to the cytoplasm. It is found in the secreted. The protein resides in the cell surface. It catalyses the reaction (2R)-2-phosphoglycerate = phosphoenolpyruvate + H2O. Its pathway is carbohydrate degradation; glycolysis; pyruvate from D-glyceraldehyde 3-phosphate: step 4/5. Functionally, catalyzes the reversible conversion of 2-phosphoglycerate (2-PG) into phosphoenolpyruvate (PEP). It is essential for the degradation of carbohydrates via glycolysis. This is Enolase from Helicobacter pylori (strain ATCC 700392 / 26695) (Campylobacter pylori).